An 82-amino-acid polypeptide reads, in one-letter code: Small ribosomal subunit protein bS16 (82 aa).

The protein belongs to the bacterial ribosomal protein bS16 family.

The polypeptide is Small ribosomal subunit protein bS16 (Sodalis glossinidius (strain morsitans)).